Here is a 532-residue protein sequence, read N- to C-terminus: Phosphoenolpyruvate carboxykinase (ATP) (532 aa).

Arg58, Tyr194, and Lys200 together coordinate substrate. Residues Lys200, His220, and 236 to 244 (GLSGTGKTT) each bind ATP. The Mn(2+) site is built by Lys200 and His220. Residue Asp257 coordinates Mn(2+). ATP-binding positions include Glu285, Arg322, 442–443 (RV), and Thr448. Arg322 serves as a coordination point for substrate.

The protein belongs to the phosphoenolpyruvate carboxykinase (ATP) family. The cofactor is Mn(2+).

It localises to the cytoplasm. The catalysed reaction is oxaloacetate + ATP = phosphoenolpyruvate + ADP + CO2. It functions in the pathway carbohydrate biosynthesis; gluconeogenesis. In terms of biological role, involved in the gluconeogenesis. Catalyzes the conversion of oxaloacetate (OAA) to phosphoenolpyruvate (PEP) through direct phosphoryl transfer between the nucleoside triphosphate and OAA. In Rubrobacter xylanophilus (strain DSM 9941 / JCM 11954 / NBRC 16129 / PRD-1), this protein is Phosphoenolpyruvate carboxykinase (ATP).